The following is a 196-amino-acid chain: Imidazole glycerol phosphate synthase subunit HisH (196 aa).

A Glutamine amidotransferase type-1 domain is found at 2–196 (DVVILDTGCA…AQLMKNFLEM (195 aa)). C77 acts as the Nucleophile in catalysis. Residues H178 and E180 contribute to the active site.

Heterodimer of HisH and HisF.

The protein localises to the cytoplasm. The catalysed reaction is 5-[(5-phospho-1-deoxy-D-ribulos-1-ylimino)methylamino]-1-(5-phospho-beta-D-ribosyl)imidazole-4-carboxamide + L-glutamine = D-erythro-1-(imidazol-4-yl)glycerol 3-phosphate + 5-amino-1-(5-phospho-beta-D-ribosyl)imidazole-4-carboxamide + L-glutamate + H(+). It carries out the reaction L-glutamine + H2O = L-glutamate + NH4(+). It participates in amino-acid biosynthesis; L-histidine biosynthesis; L-histidine from 5-phospho-alpha-D-ribose 1-diphosphate: step 5/9. Functionally, IGPS catalyzes the conversion of PRFAR and glutamine to IGP, AICAR and glutamate. The HisH subunit catalyzes the hydrolysis of glutamine to glutamate and ammonia as part of the synthesis of IGP and AICAR. The resulting ammonia molecule is channeled to the active site of HisF. The protein is Imidazole glycerol phosphate synthase subunit HisH of Yersinia pestis.